Reading from the N-terminus, the 434-residue chain is Salicylate hydroxylase (434 aa).

Residue 9–38 coordinates FAD; sequence RIGIVGGGISGVALALELCRYSHIQVQLFE.

Monomer. Requires FAD as cofactor.

It catalyses the reaction salicylate + NADH + O2 + 2 H(+) = catechol + CO2 + NAD(+) + H2O. Its pathway is aromatic compound metabolism; naphthalene degradation. The polypeptide is Salicylate hydroxylase (nahG) (Pseudomonas putida (Arthrobacter siderocapsulatus)).